Reading from the N-terminus, the 358-residue chain is DNA polymerase IV (358 aa).

In terms of domain architecture, UmuC spans Ile-4–Gly-185. The Mg(2+) site is built by Asp-8 and Asp-103. Glu-104 is an active-site residue.

This sequence belongs to the DNA polymerase type-Y family. As to quaternary structure, monomer. Requires Mg(2+) as cofactor.

Its subcellular location is the cytoplasm. It carries out the reaction DNA(n) + a 2'-deoxyribonucleoside 5'-triphosphate = DNA(n+1) + diphosphate. Functionally, poorly processive, error-prone DNA polymerase involved in untargeted mutagenesis. Copies undamaged DNA at stalled replication forks, which arise in vivo from mismatched or misaligned primer ends. These misaligned primers can be extended by PolIV. Exhibits no 3'-5' exonuclease (proofreading) activity. May be involved in translesional synthesis, in conjunction with the beta clamp from PolIII. The protein is DNA polymerase IV of Shewanella denitrificans (strain OS217 / ATCC BAA-1090 / DSM 15013).